The chain runs to 289 residues: Ribosomal RNA small subunit methyltransferase A (289 aa).

6 residues coordinate S-adenosyl-L-methionine: Asn-21, Leu-23, Gly-48, Glu-69, Asp-94, and Asn-120.

This sequence belongs to the class I-like SAM-binding methyltransferase superfamily. rRNA adenine N(6)-methyltransferase family. RsmA subfamily.

The protein localises to the cytoplasm. It catalyses the reaction adenosine(1518)/adenosine(1519) in 16S rRNA + 4 S-adenosyl-L-methionine = N(6)-dimethyladenosine(1518)/N(6)-dimethyladenosine(1519) in 16S rRNA + 4 S-adenosyl-L-homocysteine + 4 H(+). Functionally, specifically dimethylates two adjacent adenosines (A1518 and A1519) in the loop of a conserved hairpin near the 3'-end of 16S rRNA in the 30S particle. May play a critical role in biogenesis of 30S subunits. This chain is Ribosomal RNA small subunit methyltransferase A, found in Actinobacillus pleuropneumoniae serotype 3 (strain JL03).